A 710-amino-acid chain; its full sequence is Prolyl endopeptidase (710 aa).

At Met-1 the chain carries N-acetylmethionine. Lys-157 bears the N6-acetyllysine mark. Catalysis depends on charge relay system residues Ser-554, Asp-641, and His-680.

It belongs to the peptidase S9A family.

The protein resides in the cytoplasm. It carries out the reaction Hydrolysis of Pro-|-Xaa &gt;&gt; Ala-|-Xaa in oligopeptides.. In terms of biological role, cleaves peptide bonds on the C-terminal side of prolyl residues within peptides that are up to approximately 30 amino acids long. In Mus musculus (Mouse), this protein is Prolyl endopeptidase (Prep).